We begin with the raw amino-acid sequence, 227 residues long: MAGKTYINNRDNDLSEGLKQLASYLNIPTGVIQAFKSECFVRRYNKGQIIYYSSDQPTYVYLLLDGIVLRETINEDGDAYRKLNKEQLLFPLNHLFRKIELNEMCTAITPCNVIGIPKDMLEYLCKNHDDIFVTLFEKLNNELELLMEYNMALTTKLARERIEKVLYYLCHAIGYDQDEFYEIKHIMTIQLLSDLAGISRETTGHIVHELKEEKKLIKNGKNWMVIK.

41–130 contributes to the a nucleoside 3',5'-cyclic phosphate binding site; the sequence is VRRYNKGQII…LEYLCKNHDD (90 aa). Positions 156 to 227 constitute an HTH crp-type domain; it reads KLARERIEKV…KNGKNWMVIK (72 aa). Residues 189–208 constitute a DNA-binding region (H-T-H motif); sequence IQLLSDLAGISRETTGHIVH.

Its subcellular location is the cytoplasm. Functionally, positively regulates the expression of the arcABDCR operon under anaerobic conditions, thus playing an essential role in arginine catabolism. May also control the expression of genes encoding proteins which are involved in anaerobic metabolism. Can bind cyclic AMP. The sequence is that of HTH-type transcriptional regulator ArcR (arcR) from Staphylococcus haemolyticus (strain JCSC1435).